A 234-amino-acid chain; its full sequence is Orotidine 5'-phosphate decarboxylase (234 aa).

Substrate-binding positions include Asp-10, Lys-31, 58 to 67 (DLKLHDIPNT), Thr-121, Arg-183, Gln-192, Gly-212, and Arg-213. Catalysis depends on Lys-60, which acts as the Proton donor.

The protein belongs to the OMP decarboxylase family. Type 1 subfamily. Homodimer.

The enzyme catalyses orotidine 5'-phosphate + H(+) = UMP + CO2. It participates in pyrimidine metabolism; UMP biosynthesis via de novo pathway; UMP from orotate: step 2/2. Its function is as follows. Catalyzes the decarboxylation of orotidine 5'-monophosphate (OMP) to uridine 5'-monophosphate (UMP). In Halalkalibacterium halodurans (strain ATCC BAA-125 / DSM 18197 / FERM 7344 / JCM 9153 / C-125) (Bacillus halodurans), this protein is Orotidine 5'-phosphate decarboxylase.